The chain runs to 211 residues: dITP/XTP pyrophosphatase (211 aa).

Substrate is bound at residue 13–18; it reads THNPGK. Mg(2+) is bound by residues Asp45 and Asp74. Catalysis depends on Asp74, which acts as the Proton acceptor. Substrate-binding positions include Ser75, 160–163, Lys183, and 195–196; these read FGYD and HR.

Belongs to the HAM1 NTPase family. In terms of assembly, homodimer. It depends on Mg(2+) as a cofactor.

It carries out the reaction XTP + H2O = XMP + diphosphate + H(+). The catalysed reaction is dITP + H2O = dIMP + diphosphate + H(+). The enzyme catalyses ITP + H2O = IMP + diphosphate + H(+). Pyrophosphatase that catalyzes the hydrolysis of nucleoside triphosphates to their monophosphate derivatives, with a high preference for the non-canonical purine nucleotides XTP (xanthosine triphosphate), dITP (deoxyinosine triphosphate) and ITP. Seems to function as a house-cleaning enzyme that removes non-canonical purine nucleotides from the nucleotide pool, thus preventing their incorporation into DNA/RNA and avoiding chromosomal lesions. The chain is dITP/XTP pyrophosphatase from Bradyrhizobium diazoefficiens (strain JCM 10833 / BCRC 13528 / IAM 13628 / NBRC 14792 / USDA 110).